We begin with the raw amino-acid sequence, 354 residues long: Uroporphyrinogen decarboxylase (354 aa).

Substrate contacts are provided by residues 27–31, Asp-77, Tyr-154, Ser-209, and His-327; that span reads RQAGR.

The protein belongs to the uroporphyrinogen decarboxylase family. In terms of assembly, homodimer.

It localises to the cytoplasm. It catalyses the reaction uroporphyrinogen III + 4 H(+) = coproporphyrinogen III + 4 CO2. It functions in the pathway porphyrin-containing compound metabolism; protoporphyrin-IX biosynthesis; coproporphyrinogen-III from 5-aminolevulinate: step 4/4. Functionally, catalyzes the decarboxylation of four acetate groups of uroporphyrinogen-III to yield coproporphyrinogen-III. The chain is Uroporphyrinogen decarboxylase from Shewanella denitrificans (strain OS217 / ATCC BAA-1090 / DSM 15013).